Reading from the N-terminus, the 213-residue chain is CDP-diacylglycerol--inositol 3-phosphatidyltransferase (213 aa).

The Cytoplasmic segment spans residues 1–5 (MPEEN). Residues 6-26 (IFLFVPNLIGYARIVFAIISF) form a helical membrane-spanning segment. Tyr27 is a topological domain (lumenal). A helical membrane pass occupies residues 28–48 (FMPCCPFTASSFYLLSGLLDA). Mg(2+) contacts are provided by Asp47 and Asp50. The Cytoplasmic portion of the chain corresponds to 49 to 73 (FDGHAARALNQGTRFGAMLDMLTDR). A CDP-1,2-diacyl-sn-glycerol-binding residues include Gly51, Arg55, and Thr61. Residues Asp68 and Asp72 each contribute to the Mg(2+) site. Residue Asp72 is the Proton acceptor of the active site. Residues 74-94 (CATMCLLVNLALLYPRATLLF) traverse the membrane as a helical segment. Residue Gln95 is a topological domain, lumenal. The helical transmembrane segment at 96-116 (LSMSLDVASHWLHLHSSVVRG) threads the bilayer. Residues 117 to 139 (SESHKMIDLSGNPVLRIYYTSRP) are Cytoplasmic-facing. A helical transmembrane segment spans residues 140-160 (ALFTLCAGNELFYCLLYLFNF). Topologically, residues 161 to 174 (SEGPLVGSVGLFRM) are lumenal. Residues 175–195 (GLWITAPIALLKSIISVIHLV) form a helical membrane-spanning segment. Over 196-213 (TAARNMAALDAADRAKKK) the chain is Cytoplasmic.

Belongs to the CDP-alcohol phosphatidyltransferase class-I family. Mn(2+) serves as cofactor. Mg(2+) is required as a cofactor. As to expression, detected in liver (at protein level). Widely expressed. Highly expressed in the brain and kidney; lower levels in heart, spleen, lung, liver, skeletal muscle and testis.

The protein localises to the endoplasmic reticulum membrane. It is found in the cell membrane. The enzyme catalyses a CDP-1,2-diacyl-sn-glycerol + myo-inositol = a 1,2-diacyl-sn-glycero-3-phospho-(1D-myo-inositol) + CMP + H(+). In terms of biological role, catalyzes the biosynthesis of phosphatidylinositol (PtdIns) as well as PtdIns:inositol exchange reaction. May thus act to reduce an excessive cellular PtdIns content. The exchange activity is due to the reverse reaction of PtdIns synthase and is dependent on CMP, which is tightly bound to the enzyme. The polypeptide is CDP-diacylglycerol--inositol 3-phosphatidyltransferase (Rattus norvegicus (Rat)).